A 593-amino-acid chain; its full sequence is Double-stranded RNA-binding protein 2 (593 aa).

2 consecutive DRBM domains span residues 1–70 (MYKN…ELSK) and 87–155 (IYKN…ELKQ). A compositionally biased stretch (polar residues) spans 188 to 197 (LNQTNGGKTP). Disordered regions lie at residues 188-221 (LNQT…KSNA), 357-408 (APDF…ESNQ), and 546-593 (VNSS…KLHI). Residues 205–219 (SSNRPSSRRPSYPKS) are compositionally biased toward low complexity. Positions 378–408 (ESSPASEQESKSHTASSSATRSPSQQLESNQ) are enriched in polar residues. A compositionally biased stretch (low complexity) spans 572–586 (RTNTSDTSNAATASS).

In terms of biological role, binds double-stranded RNA. The protein is Double-stranded RNA-binding protein 2 (DRB2) of Oryza sativa subsp. japonica (Rice).